Reading from the N-terminus, the 420-residue chain is Serine hydroxymethyltransferase (420 aa).

(6S)-5,6,7,8-tetrahydrofolate contacts are provided by residues Leu123 and 127–129; that span reads GHL. Lys232 bears the N6-(pyridoxal phosphate)lysine mark.

This sequence belongs to the SHMT family. As to quaternary structure, homodimer. Requires pyridoxal 5'-phosphate as cofactor.

It is found in the cytoplasm. It catalyses the reaction (6R)-5,10-methylene-5,6,7,8-tetrahydrofolate + glycine + H2O = (6S)-5,6,7,8-tetrahydrofolate + L-serine. It participates in one-carbon metabolism; tetrahydrofolate interconversion. It functions in the pathway amino-acid biosynthesis; glycine biosynthesis; glycine from L-serine: step 1/1. Functionally, catalyzes the reversible interconversion of serine and glycine with tetrahydrofolate (THF) serving as the one-carbon carrier. This reaction serves as the major source of one-carbon groups required for the biosynthesis of purines, thymidylate, methionine, and other important biomolecules. Also exhibits THF-independent aldolase activity toward beta-hydroxyamino acids, producing glycine and aldehydes, via a retro-aldol mechanism. This is Serine hydroxymethyltransferase from Ehrlichia chaffeensis (strain ATCC CRL-10679 / Arkansas).